A 232-amino-acid chain; its full sequence is Probable dihydroorotate dehydrogenase B (NAD(+)), electron transfer subunit (232 aa).

One can recognise an FAD-binding FR-type domain in the interval 1-86; it reads MYYTRITQIE…RGAFGSAFTP (86 aa). Positions 202, 207, 210, and 219 each coordinate [2Fe-2S] cluster.

The protein belongs to the PyrK family. In terms of assembly, heterotetramer of 2 PyrK and 2 PyrD type B subunits. [2Fe-2S] cluster serves as cofactor. FAD is required as a cofactor.

It functions in the pathway pyrimidine metabolism; UMP biosynthesis via de novo pathway; orotate from (S)-dihydroorotate (NAD(+) route): step 1/1. Functionally, responsible for channeling the electrons from the oxidation of dihydroorotate from the FMN redox center in the PyrD type B subunit to the ultimate electron acceptor NAD(+). In Archaeoglobus fulgidus (strain ATCC 49558 / DSM 4304 / JCM 9628 / NBRC 100126 / VC-16), this protein is Probable dihydroorotate dehydrogenase B (NAD(+)), electron transfer subunit.